Consider the following 584-residue polypeptide: DNA ligase (584 aa).

Glutamate 249 provides a ligand contact to ATP. Residue lysine 251 is the N6-AMP-lysine intermediate of the active site. Positions 256, 271, 301, 341, 416, and 422 each coordinate ATP.

This sequence belongs to the ATP-dependent DNA ligase family. It depends on Mg(2+) as a cofactor.

It catalyses the reaction ATP + (deoxyribonucleotide)n-3'-hydroxyl + 5'-phospho-(deoxyribonucleotide)m = (deoxyribonucleotide)n+m + AMP + diphosphate.. DNA ligase that seals nicks in double-stranded DNA during DNA replication, DNA recombination and DNA repair. This Pyrobaculum islandicum (strain DSM 4184 / JCM 9189 / GEO3) protein is DNA ligase.